Consider the following 350-residue polypeptide: Phosphoribosylformylglycinamidine cyclo-ligase (350 aa).

It belongs to the AIR synthase family.

Its subcellular location is the cytoplasm. It carries out the reaction 2-formamido-N(1)-(5-O-phospho-beta-D-ribosyl)acetamidine + ATP = 5-amino-1-(5-phospho-beta-D-ribosyl)imidazole + ADP + phosphate + H(+). It functions in the pathway purine metabolism; IMP biosynthesis via de novo pathway; 5-amino-1-(5-phospho-D-ribosyl)imidazole from N(2)-formyl-N(1)-(5-phospho-D-ribosyl)glycinamide: step 2/2. The polypeptide is Phosphoribosylformylglycinamidine cyclo-ligase (Syntrophotalea carbinolica (strain DSM 2380 / NBRC 103641 / GraBd1) (Pelobacter carbinolicus)).